Reading from the N-terminus, the 360-residue chain is MTEQQSLEAIRYDHDHGQLKILNQLLLPSEYVYENVEGIEDGWQAIRQMKVRGAPAIAIVGMLSLAVELRSKSFTEMNEFDKFIRDSLEHLKTARPTAVNIFLACDLITKLIDNLIILGDEAVGVAKIEVIRHIEEMLHKDVESNKRIGSYGAEAILAKVPSKEKINVLTHCNTGSLATAGYGTALGVIRSLYGRDSIDRVFCTETRPYNQGSRLTAFELVHDGIPATLITDSMASLVMKKKDISAVVVGADRVLGNGDTANKIGTYQLAITAKYHKIPFYIAAPTTTIVLDDSKDIVIEERSHKEVTEIQGIPIAPSGINVYNPAFDVTPAELITGIITEVGVFSPSEMKSKLQTILNS.

Asp252 serves as the catalytic Proton donor.

Belongs to the eIF-2B alpha/beta/delta subunits family. MtnA subfamily.

The protein localises to the cytoplasm. Its subcellular location is the nucleus. It carries out the reaction 5-(methylsulfanyl)-alpha-D-ribose 1-phosphate = 5-(methylsulfanyl)-D-ribulose 1-phosphate. Its pathway is amino-acid biosynthesis; L-methionine biosynthesis via salvage pathway; L-methionine from S-methyl-5-thio-alpha-D-ribose 1-phosphate: step 1/6. In terms of biological role, catalyzes the interconversion of methylthioribose-1-phosphate (MTR-1-P) into methylthioribulose-1-phosphate (MTRu-1-P). The polypeptide is Methylthioribose-1-phosphate isomerase (Trichoplax adhaerens (Trichoplax reptans)).